We begin with the raw amino-acid sequence, 266 residues long: NADH dehydrogenase [ubiquinone] iron-sulfur protein 3, mitochondrial (266 aa).

The N-terminal 38 residues, 1–38 (MAAAVAAAARGCWQRLVGSAAPARVAGRPSVLLLPVRR), are a transit peptide targeting the mitochondrion.

The protein belongs to the complex I 30 kDa subunit family. In terms of assembly, core subunit of respiratory chain NADH dehydrogenase (Complex I) which is composed of 45 different subunits. Interacts with NDUFAF3. Interacts with RAB5IF. Found in subcomplexes containing subunits NDUFS2, MT-ND1 and NDUFA13.

The protein localises to the mitochondrion inner membrane. It catalyses the reaction a ubiquinone + NADH + 5 H(+)(in) = a ubiquinol + NAD(+) + 4 H(+)(out). In terms of biological role, core subunit of the mitochondrial membrane respiratory chain NADH dehydrogenase (Complex I) which catalyzes electron transfer from NADH through the respiratory chain, using ubiquinone as an electron acceptor. Essential for the catalytic activity and assembly of complex I. In Bos taurus (Bovine), this protein is NADH dehydrogenase [ubiquinone] iron-sulfur protein 3, mitochondrial (NDUFS3).